A 105-amino-acid polypeptide reads, in one-letter code: Met repressor (105 aa).

It belongs to the MetJ family. In terms of assembly, homodimer.

The protein resides in the cytoplasm. This regulatory protein, when combined with SAM (S-adenosylmethionine) represses the expression of the methionine regulon and of enzymes involved in SAM synthesis. The polypeptide is Met repressor (Vibrio cholerae serotype O1 (strain ATCC 39541 / Classical Ogawa 395 / O395)).